We begin with the raw amino-acid sequence, 459 residues long: MIKDPFARLGLDREVLTVSQLNGRARVLLEDVFSNIWVEGEISNLARPASGHVYFTLKDSGAQVRCALFRQNAARVRQALKDGLAVKVRGKVSLFEGRGDYQLILDTVEPAGDGALRLAFDALKEKLSAEGLFSAERKVPLPAHPQRIGIISSPTGAVIRDIISVFRRRAPQVQLTLIPTAVQGREATAQIVRALKLADARGFDALILARGGGSLEDLWCFNEEAVARAVDACVTPIVSAVGHETDVSISDFVADVRAPTPSAAAELLAPDSSHLIRQVESLHRRLVMRMRDRLMRDRLRLEGMTRRLRHPGERLRQQAQRLDDLDMRMRRAFERQLNTRRERLIRLETRLAGQHPGRQLALLRQRLDSLAERLPRAMNEGLKRRRLQLQSQMQTLHVVSPLATLGRGYSILLDERGNAIRNAAQTHTGQRLKARLGEGELQVRVEDNHLTPVTLSLLD.

Belongs to the XseA family. Heterooligomer composed of large and small subunits.

It localises to the cytoplasm. The catalysed reaction is Exonucleolytic cleavage in either 5'- to 3'- or 3'- to 5'-direction to yield nucleoside 5'-phosphates.. Its function is as follows. Bidirectionally degrades single-stranded DNA into large acid-insoluble oligonucleotides, which are then degraded further into small acid-soluble oligonucleotides. The sequence is that of Exodeoxyribonuclease 7 large subunit from Pseudomonas fluorescens (strain Pf0-1).